The following is a 580-amino-acid chain: uncharacterized protein (580 aa).

A compositionally biased stretch (polar residues) spans 1–44 (MSESSVNADTPKNTNDVLNGAYQSATTEPEGQYRSATDNPSLYQ). The interval 1-45 (MSESSVNADTPKNTNDVLNGAYQSATTEPEGQYRSATDNPSLYQV) is disordered. Ser99 bears the Phosphoserine mark. 12 consecutive transmembrane segments (helical) span residues 143–163 (IYAYASLTIAWGSSVLSPASA), 177–197 (LLNVSLFMLGYCLGPICWAPM), 207–227 (LYIGLFLFSVFQIAVATAQDI), 235–255 (FFGGYGACVPLCVVAAAFADM), 265–285 (ITIFAAVIFVGPLVAPIVGGF), 295–315 (WTEYITSFMGFLSIILIYLFC), 370–390 (PIVFLVSLYCSFVYAIIYLLL), 405–425 (LGVSALPYIGILVGVFIGCGI), 450–470 (LPPMMIGSFLFPAGIFWLAWS), 476–496 (VHWIVPTLSGLLTGAGILLIF), 511–533 (AASVFAANVIMRSAVAGGFPLFA), and 546–566 (GSLLGFIATALIPMPFAFFFF).

Belongs to the major facilitator superfamily. CAR1 family.

The protein resides in the membrane. This is an uncharacterized protein from Schizosaccharomyces pombe (strain 972 / ATCC 24843) (Fission yeast).